A 215-amino-acid chain; its full sequence is Peroxiredoxin-5, mitochondrial (215 aa).

Residues 1–53 (MGLAGVCVLRRSAGYILGGAAGQSVAATAAARRRSEGGWASGGVRSFSRAAAA) constitute a mitochondrion transit peptide. The 159-residue stretch at 57–215 (IKVGDAIPAV…SLAPSIISQL (159 aa)) folds into the Thioredoxin domain. Lys-76 bears the N6-acetyllysine mark. Lys-84 carries the N6-acetyllysine; alternate modification. Lys-84 carries the N6-succinyllysine; alternate modification. Cys-101 functions as the Cysteine sulfenic acid (-SOH) intermediate in the catalytic mechanism. Cys-101 carries S-palmitoyl cysteine lipidation. Cysteines 101 and 205 form a disulfide. Position 117 is an N6-succinyllysine (Lys-117). 2 positions are modified to phosphoserine: Ser-172 and Ser-183. The Microbody targeting signal signature appears at 213-215 (SQL).

It belongs to the peroxiredoxin family. Prx5 subfamily. Monomer. S-palmitoylated. Palmitoylation occurs on the active site, inhibiting its reactivity; therefore PRDX5 palmitoylation status determines its antioxidant capacity. In terms of processing, S-palmitoylated. Depalmitoylated by ABHD10.

It is found in the mitochondrion. The protein localises to the cytoplasm. Its subcellular location is the peroxisome matrix. The enzyme catalyses a hydroperoxide + [thioredoxin]-dithiol = an alcohol + [thioredoxin]-disulfide + H2O. In terms of biological role, thiol-specific peroxidase that catalyzes the reduction of hydrogen peroxide and organic hydroperoxides to water and alcohols, respectively. Plays a role in cell protection against oxidative stress by detoxifying peroxides and as sensor of hydrogen peroxide-mediated signaling events. In Papio hamadryas (Hamadryas baboon), this protein is Peroxiredoxin-5, mitochondrial (PRDX5).